The sequence spans 318 residues: uncharacterized protein (318 aa).

The helical transmembrane segment at 2–22 (ILELIIVLVLLVLAFKSLKIL) threads the bilayer. A disordered region spans residues 295–318 (SDPEDKGVSEVETESQPAEKPEKH).

Belongs to the band 7/mec-2 family.

The protein resides in the membrane. This is an uncharacterized protein from Methanothermobacter thermautotrophicus (strain ATCC 29096 / DSM 1053 / JCM 10044 / NBRC 100330 / Delta H) (Methanobacterium thermoautotrophicum).